The primary structure comprises 365 residues: Dehydroprecondylocarpine acetate synthase (365 aa).

4 residues coordinate Zn(2+): Cys105, Cys108, Cys111, and Cys119. N-linked (GlcNAc...) asparagine glycosylation is found at Asn142 and Asn147. Positions 194, 196, 197, 216, 217, 218, 221, 279, 281, 303, 305, and 350 each coordinate NADP(+).

This sequence belongs to the zinc-containing alcohol dehydrogenase family. Homodimer. Interaction with catharanthine synthase (CS) and tabersonine synthase (TS). Requires Zn(2+) as cofactor.

The protein localises to the cytoplasm. It is found in the cytosol. It catalyses the reaction dihydroprecondylocarpine acetate + NADP(+) = precondylocarpine acetate + NADPH + H(+). The protein operates within alkaloid biosynthesis. Its function is as follows. Component of the seco-iridoid and derivatives monoterpenoid indole alkaloids (MIAs, e.g. vinblastine, catharanthine, tabersonine, vincadifformine, vindoline, vincristine, quinine and strychnine) biosynthesis pathway. Catalyzes the non-canonical 1,4-reduction of an alpha,beta-unsaturated iminium moiety; by contrast with the classic alcohol dehydrogenase mechanism, this reaction does not require a catalytic zinc or proton relay. Converts precondylocarpine acetate to dihydroprecondylocarpine acetate, that is spontaneously converted into dehydrosecodine intermediate, precursor of angryline. May also trigger the non-stereoselective 1,4-reduction reaction at C15 of dehydrosecodine leading to the production of secodine, a precursor of vincadifformine. The chain is Dehydroprecondylocarpine acetate synthase from Catharanthus roseus (Madagascar periwinkle).